The chain runs to 551 residues: ATP-dependent DNA helicase XPD (551 aa).

Residues Met1–Val228 enclose the Helicase ATP-binding domain. Residue Ala29 to Thr36 coordinates ATP. [4Fe-4S] cluster contacts are provided by Cys88, Cys102, Cys105, and Cys137. Positions Asp180–His183 match the DEAH box motif.

The protein belongs to the helicase family. RAD3/XPD subfamily. In terms of assembly, monomer. It depends on [4Fe-4S] cluster as a cofactor.

The enzyme catalyses Couples ATP hydrolysis with the unwinding of duplex DNA at the replication fork by translocating in the 5'-3' direction. This creates two antiparallel DNA single strands (ssDNA). The leading ssDNA polymer is the template for DNA polymerase III holoenzyme which synthesizes a continuous strand.. It catalyses the reaction ATP + H2O = ADP + phosphate + H(+). In terms of biological role, ATP-dependent 5'-3' DNA helicase. Thought to be involved in nucleotide excision repair (NER) of DNA. The chain is ATP-dependent DNA helicase XPD from Sulfolobus acidocaldarius (strain ATCC 33909 / DSM 639 / JCM 8929 / NBRC 15157 / NCIMB 11770).